The following is a 102-amino-acid chain: Noncompact myelin-associated protein (102 aa).

At 1–30 (MTTATPLGDTTFFSLNMTTRGEDFLYKSSG) the chain is on the extracellular side. The helical transmembrane segment at 31 to 51 (AIVAAVVVVVIIIFTVVLILL) threads the bilayer. At 52 to 102 (KMYNRKMRTRRELEPKGPKPTAPSAVGPNSNGSQHPATVTFSPVDVQVETR) the chain is on the cytoplasmic side. The disordered stretch occupies residues 60–102 (TRRELEPKGPKPTAPSAVGPNSNGSQHPATVTFSPVDVQVETR). Positions 78 to 92 (GPNSNGSQHPATVTF) are enriched in polar residues.

In terms of processing, glycosylated.

It is found in the cell membrane. Its function is as follows. Plays a role in myelin formation. This is Noncompact myelin-associated protein (NCMAP) from Homo sapiens (Human).